We begin with the raw amino-acid sequence, 607 residues long: ENTH domain-containing protein 1 (607 aa).

The 133-residue stretch at 9–141 (NFVKNYSDAE…MDEPLLCKER (133 aa)) folds into the ENTH domain. Positions 543-574 (EAKNSISVLLREVKRAIARLHEDLSTVIQELN) form a coiled coil.

This is ENTH domain-containing protein 1 (ENTHD1) from Homo sapiens (Human).